We begin with the raw amino-acid sequence, 92 residues long: Small ribosomal subunit protein uS19c (92 aa).

It belongs to the universal ribosomal protein uS19 family.

Its subcellular location is the plastid. It localises to the chloroplast. Functionally, protein S19 forms a complex with S13 that binds strongly to the 16S ribosomal RNA. The protein is Small ribosomal subunit protein uS19c of Cicer arietinum (Chickpea).